Here is a 183-residue protein sequence, read N- to C-terminus: Deoxyuridine 5'-triphosphate nucleotidohydrolase (183 aa).

Residues 67 to 69, N80, 84 to 86, and K94 contribute to the substrate site; these read RSG and TID. The segment at 138 to 183 is disordered; the sequence is RAEGGFGSTGGHAGLDPASGTSGQVAEGGPTGGNRYASVVSDREGQ. Gly residues predominate over residues 141-150; that stretch reads GGFGSTGGHA.

Belongs to the dUTPase family. Mg(2+) is required as a cofactor.

It carries out the reaction dUTP + H2O = dUMP + diphosphate + H(+). The protein operates within pyrimidine metabolism; dUMP biosynthesis; dUMP from dCTP (dUTP route): step 2/2. This enzyme is involved in nucleotide metabolism: it produces dUMP, the immediate precursor of thymidine nucleotides and it decreases the intracellular concentration of dUTP so that uracil cannot be incorporated into DNA. The chain is Deoxyuridine 5'-triphosphate nucleotidohydrolase from Streptomyces coelicolor (strain ATCC BAA-471 / A3(2) / M145).